A 253-amino-acid chain; its full sequence is Snake venom serine proteinase 14 (253 aa).

A signal peptide spans 1–18 (MVLIRVLANLLILQLSYA). A propeptide spanning residues 19–24 (QKSSEL) is cleaved from the precursor. The Peptidase S1 domain occupies 25 to 244 (VIGGDECNIN…YTDWIQSIIA (220 aa)). 6 disulfide bridges follow: C31–C158, C49–C65, C93–C251, C137–C205, C169–C184, and C195–C220. Active-site charge relay system residues include H64 and D105. N-linked (GlcNAc...) asparagine glycans are attached at residues N116, N117, and N149. Catalysis depends on S199, which acts as the Charge relay system.

It belongs to the peptidase S1 family. Snake venom subfamily. As to quaternary structure, monomer. In terms of tissue distribution, expressed by the venom gland.

It is found in the secreted. Snake venom serine protease that may act in the hemostasis system of the prey. The protein is Snake venom serine proteinase 14 of Crotalus adamanteus (Eastern diamondback rattlesnake).